We begin with the raw amino-acid sequence, 588 residues long: Transcription factor 7-like 1 (588 aa).

A compositionally biased stretch (gly residues) spans 1–31; the sequence is MPQLGGGGGGGGGGSGGGGGSSAGAAGGGDD. Residues 1 to 74 form a CTNNB1-binding region; the sequence is MPQLGGGGGG…VKSSLVNESE (74 aa). Disordered stretches follow at residues 1-101, 203-234, and 409-506; these read MPQL…PRDY, SPGS…SPYY, and LYPT…LSLT. Positions 67 to 81 are enriched in low complexity; it reads SSLVNESENQSSSSD. Residues 83-101 show a composition bias toward basic and acidic residues; that stretch reads EAERRPQPVRDTFQKPRDY. Positions 346-414 form a DNA-binding region, HMG box; it reads VKKPLNAFML…LHSQLYPTWS (69 aa). The short motif at 421-427 is the Nuclear localization signal element; that stretch reads KKKKRKR. Low complexity-rich tracts occupy residues 431 to 441 and 478 to 497; these read LSQTQSQQQVQ and SPAT…ATHS.

The protein belongs to the TCF/LEF family. As to quaternary structure, binds the armadillo repeat of CTNNB1 and forms a stable complex. Interacts with DAZAP2. Detected in hair follicles and skin keratinocytes, and at lower levels in stomach epithelium.

The protein localises to the nucleus. In terms of biological role, participates in the Wnt signaling pathway. Binds to DNA and acts as a repressor in the absence of CTNNB1, and as an activator in its presence. Necessary for the terminal differentiation of epidermal cells, the formation of keratohyalin granules and the development of the barrier function of the epidermis. Down-regulates NQO1, leading to increased mitomycin c resistance. In Homo sapiens (Human), this protein is Transcription factor 7-like 1 (TCF7L1).